We begin with the raw amino-acid sequence, 262 residues long: Mediator of RNA polymerase II transcription subunit 8 (262 aa).

Residues 168 to 211 are a coiled coil; sequence LEEKEMGVKNVITGLKRQLDEGDEEDEEEEEEEEDMQGEEMEVV. Positions 183–206 are disordered; the sequence is KRQLDEGDEEDEEEEEEEEDMQGE. The segment covering 188–206 has biased composition (acidic residues); it reads EGDEEDEEEEEEEEDMQGE.

Belongs to the Mediator complex subunit 8 family. As to quaternary structure, component of the Mediator complex.

The protein localises to the nucleus. In terms of biological role, component of the Mediator complex, a coactivator involved in the regulated transcription of nearly all RNA polymerase II-dependent genes. Mediator functions as a bridge to convey information from gene-specific regulatory proteins to the basal RNA polymerase II transcription machinery. Mediator is recruited to promoters by direct interactions with regulatory proteins and serves as a scaffold for the assembly of a functional preinitiation complex with RNA polymerase II and the general transcription factors. This Coccidioides immitis (strain RS) (Valley fever fungus) protein is Mediator of RNA polymerase II transcription subunit 8 (MED8).